Consider the following 507-residue polypeptide: ATP synthase subunit alpha, chloroplastic (507 aa).

170-177 contributes to the ATP binding site; that stretch reads GDRQTGKT.

This sequence belongs to the ATPase alpha/beta chains family. As to quaternary structure, F-type ATPases have 2 components, CF(1) - the catalytic core - and CF(0) - the membrane proton channel. CF(1) has five subunits: alpha(3), beta(3), gamma(1), delta(1), epsilon(1). CF(0) has four main subunits: a, b, b' and c.

It localises to the plastid. The protein resides in the chloroplast thylakoid membrane. It catalyses the reaction ATP + H2O + 4 H(+)(in) = ADP + phosphate + 5 H(+)(out). Functionally, produces ATP from ADP in the presence of a proton gradient across the membrane. The alpha chain is a regulatory subunit. In Populus alba (White poplar), this protein is ATP synthase subunit alpha, chloroplastic.